Here is a 176-residue protein sequence, read N- to C-terminus: Inner membrane-spanning protein YciB (176 aa).

The next 5 membrane-spanning stretches (helical) occupy residues 22 to 42, 50 to 70, 81 to 101, 121 to 141, and 149 to 169; these read IYYA…YTWL, VALI…YYHN, IYSL…KPLI, IAWA…AFWL, and FKVF…GIYI.

It belongs to the YciB family.

The protein resides in the cell inner membrane. In terms of biological role, plays a role in cell envelope biogenesis, maintenance of cell envelope integrity and membrane homeostasis. The sequence is that of Inner membrane-spanning protein YciB from Sodalis glossinidius (strain morsitans).